Here is a 351-residue protein sequence, read N- to C-terminus: Probable dual-specificity RNA methyltransferase RlmN (351 aa).

Residue Glu-97 is the Proton acceptor of the active site. The region spanning 103 to 337 (YDYGNTVCIS…VTVRKERGVD (235 aa)) is the Radical SAM core domain. An intrachain disulfide couples Cys-110 to Cys-342. 3 residues coordinate [4Fe-4S] cluster: Cys-117, Cys-121, and Cys-124. S-adenosyl-L-methionine-binding positions include 166-167 (GE), Ser-198, 221-223 (SLH), and Asn-299. The active-site S-methylcysteine intermediate is Cys-342.

Belongs to the radical SAM superfamily. RlmN family. Requires [4Fe-4S] cluster as cofactor.

The protein resides in the cytoplasm. It carries out the reaction adenosine(2503) in 23S rRNA + 2 reduced [2Fe-2S]-[ferredoxin] + 2 S-adenosyl-L-methionine = 2-methyladenosine(2503) in 23S rRNA + 5'-deoxyadenosine + L-methionine + 2 oxidized [2Fe-2S]-[ferredoxin] + S-adenosyl-L-homocysteine. The catalysed reaction is adenosine(37) in tRNA + 2 reduced [2Fe-2S]-[ferredoxin] + 2 S-adenosyl-L-methionine = 2-methyladenosine(37) in tRNA + 5'-deoxyadenosine + L-methionine + 2 oxidized [2Fe-2S]-[ferredoxin] + S-adenosyl-L-homocysteine. Its function is as follows. Specifically methylates position 2 of adenine 2503 in 23S rRNA and position 2 of adenine 37 in tRNAs. This Natranaerobius thermophilus (strain ATCC BAA-1301 / DSM 18059 / JW/NM-WN-LF) protein is Probable dual-specificity RNA methyltransferase RlmN.